We begin with the raw amino-acid sequence, 204 residues long: Minor allergen Cla h 7 (204 aa).

Residues 5-195 (IAIIFYSTWG…ELTAQGKAFY (191 aa)) enclose the Flavodoxin-like domain.

It belongs to the WrbA family.

It localises to the cytoplasm. The sequence is that of Minor allergen Cla h 7 (CLAH7) from Davidiella tassiana (Mycosphaerella tassiana).